The sequence spans 74 residues: NAD(P)H-quinone oxidoreductase subunit O (74 aa).

This sequence belongs to the complex I NdhO subunit family. In terms of assembly, NDH-1 can be composed of about 15 different subunits; different subcomplexes with different compositions have been identified which probably have different functions.

It localises to the cellular thylakoid membrane. It carries out the reaction a plastoquinone + NADH + (n+1) H(+)(in) = a plastoquinol + NAD(+) + n H(+)(out). The catalysed reaction is a plastoquinone + NADPH + (n+1) H(+)(in) = a plastoquinol + NADP(+) + n H(+)(out). In terms of biological role, NDH-1 shuttles electrons from an unknown electron donor, via FMN and iron-sulfur (Fe-S) centers, to quinones in the respiratory and/or the photosynthetic chain. The immediate electron acceptor for the enzyme in this species is believed to be plastoquinone. Couples the redox reaction to proton translocation, and thus conserves the redox energy in a proton gradient. Cyanobacterial NDH-1 also plays a role in inorganic carbon-concentration. This chain is NAD(P)H-quinone oxidoreductase subunit O, found in Synechococcus sp. (strain RCC307).